The chain runs to 217 residues: MINLILLGLPGAGKGTASEQIVDKYHLAHISTGDMFREAMANKTPVGLEAKSYIDKGDLVPDEVTAKLVEERLGQDDVKNGFILDGFPRTTNQAELLDEITTRLNKQLTNVIAIDVKEETLIDRLSARFMCKNCGATYNKFSKKPKVEGTCDRCGGHEFYQREDDKPEVVKNRLEVNEKMNAPLKEYYDKKGLLATVNGEQVPEKVFADIDAILSKD.

11–16 (GAGKGT) is a binding site for ATP. The interval 31–60 (STGDMFREAMANKTPVGLEAKSYIDKGDLV) is NMP. Residues threonine 32, arginine 37, 58 to 60 (DLV), 86 to 89 (GFPR), and glutamine 93 contribute to the AMP site. The tract at residues 127-165 (ARFMCKNCGATYNKFSKKPKVEGTCDRCGGHEFYQREDD) is LID. Arginine 128 is an ATP binding site. Zn(2+) contacts are provided by cysteine 131 and cysteine 134. An ATP-binding site is contributed by 137–138 (TY). Residues cysteine 151 and cysteine 154 each coordinate Zn(2+). AMP contacts are provided by arginine 162 and arginine 173. Glutamine 201 contributes to the ATP binding site.

This sequence belongs to the adenylate kinase family. Monomer.

Its subcellular location is the cytoplasm. The enzyme catalyses AMP + ATP = 2 ADP. It functions in the pathway purine metabolism; AMP biosynthesis via salvage pathway; AMP from ADP: step 1/1. Its function is as follows. Catalyzes the reversible transfer of the terminal phosphate group between ATP and AMP. Plays an important role in cellular energy homeostasis and in adenine nucleotide metabolism. The chain is Adenylate kinase from Lactobacillus delbrueckii subsp. bulgaricus (strain ATCC 11842 / DSM 20081 / BCRC 10696 / JCM 1002 / NBRC 13953 / NCIMB 11778 / NCTC 12712 / WDCM 00102 / Lb 14).